Reading from the N-terminus, the 138-residue chain is ATP synthase epsilon chain (138 aa).

This sequence belongs to the ATPase epsilon chain family. In terms of assembly, F-type ATPases have 2 components, CF(1) - the catalytic core - and CF(0) - the membrane proton channel. CF(1) has five subunits: alpha(3), beta(3), gamma(1), delta(1), epsilon(1). CF(0) has three main subunits: a, b and c.

Its subcellular location is the cell inner membrane. Its function is as follows. Produces ATP from ADP in the presence of a proton gradient across the membrane. The sequence is that of ATP synthase epsilon chain from Polaromonas naphthalenivorans (strain CJ2).